We begin with the raw amino-acid sequence, 111 residues long: Auxin-repressed 12.5 kDa protein (111 aa).

A disordered region spans residues 18 to 111; that stretch reads ERGLGMLRKV…SGETRSKHHR (94 aa). Over residues 43–57 the composition is skewed to low complexity; it reads TMPTTPTTPVTPTTP. Residues 74–95 are compositionally biased toward polar residues; it reads SNLSSKTMGNQVFDSPQPNSPT.

The protein belongs to the DRM1/ARP family.

The polypeptide is Auxin-repressed 12.5 kDa protein (Fragaria ananassa (Strawberry)).